The primary structure comprises 118 residues: Turripeptide NCR-01 (118 aa).

The first 16 residues, 1-16, serve as a signal peptide directing secretion; sequence MLRLILAVALVAACLA. Residues 63 to 118 form a disordered region; it reads QGFQGFLPQPHQKRDSYQHGGYQHQQSFDNFQGSGGMNNDNSDDSFALRNFNNDGY. Residues 85–102 show a composition bias toward polar residues; it reads QHQQSFDNFQGSGGMNND.

Expressed by the venom duct.

It localises to the secreted. The chain is Turripeptide NCR-01 from Gemmula speciosa (Splendid gem-turris).